The sequence spans 600 residues: NADH-ubiquinone oxidoreductase chain 5 (600 aa).

A run of 16 helical transmembrane segments spans residues 1–21 (MYIL…LFGR), 27–47 (GAGI…LLIF), 81–101 (LTAV…IFST), 110–130 (VPRF…LVTS), 136–156 (LFIG…FWLT), 178–198 (FVLA…ASVF), 200–220 (IVAL…FIGA), 241–261 (TPVS…FLLI), 274–294 (LMVV…IGLV), 301–323 (VIAY…SQYS), 327–347 (FHLM…GSVI), 366–386 (IPFT…FPYL), 404–424 (YLAF…AYSL), 450–470 (WNLT…GYLT), 488–508 (SIKL…VVLY), and 520–540 (SPVG…NYII).

Belongs to the complex I subunit 5 family.

The protein resides in the mitochondrion inner membrane. The catalysed reaction is a ubiquinone + NADH + 5 H(+)(in) = a ubiquinol + NAD(+) + 4 H(+)(out). Core subunit of the mitochondrial membrane respiratory chain NADH dehydrogenase (Complex I) that is believed to belong to the minimal assembly required for catalysis. Complex I functions in the transfer of electrons from NADH to the respiratory chain. The immediate electron acceptor for the enzyme is believed to be ubiquinone. This Metridium senile (Brown sea anemone) protein is NADH-ubiquinone oxidoreductase chain 5 (ND5).